We begin with the raw amino-acid sequence, 200 residues long: uncharacterized protein (200 aa).

The interval 149–200 is disordered; the sequence is APDPGGSVATEEVLRSDDRDSHTQDSASEWPEGNDSVGSAAMRIDLSRIGGT. Residues 160 to 171 show a composition bias toward basic and acidic residues; it reads EVLRSDDRDSHT.

It to A.tumefaciens Ti plasmid conjugal transfer region I ORFR2 and ORFR3.

This is an uncharacterized protein from Sinorhizobium fredii (strain NBRC 101917 / NGR234).